Reading from the N-terminus, the 177-residue chain is MEELIAKRYLKAIKQGSNAESMREIALIFSILSEAFNDKKFIQIINNPDVSRDQKSEILLAAVKSAGYKEVENLIKLLAEHNRIEIIPAIAEVMRKDIAKTNRVYSGVVYSDSVVDSKVMEDLGNGLGSRFNSKISLKFVKDNFNGIKVDVEDLGVEISFSKARINTQMIEHIIKAI.

The protein belongs to the ATPase delta chain family. As to quaternary structure, F-type ATPases have 2 components, F(1) - the catalytic core - and F(0) - the membrane proton channel. F(1) has five subunits: alpha(3), beta(3), gamma(1), delta(1), epsilon(1). F(0) has three main subunits: a(1), b(2) and c(10-14). The alpha and beta chains form an alternating ring which encloses part of the gamma chain. F(1) is attached to F(0) by a central stalk formed by the gamma and epsilon chains, while a peripheral stalk is formed by the delta and b chains.

The protein localises to the cell inner membrane. In terms of biological role, f(1)F(0) ATP synthase produces ATP from ADP in the presence of a proton or sodium gradient. F-type ATPases consist of two structural domains, F(1) containing the extramembraneous catalytic core and F(0) containing the membrane proton channel, linked together by a central stalk and a peripheral stalk. During catalysis, ATP synthesis in the catalytic domain of F(1) is coupled via a rotary mechanism of the central stalk subunits to proton translocation. This protein is part of the stalk that links CF(0) to CF(1). It either transmits conformational changes from CF(0) to CF(1) or is implicated in proton conduction. The polypeptide is ATP synthase subunit delta (Sulfurimonas denitrificans (strain ATCC 33889 / DSM 1251) (Thiomicrospira denitrificans (strain ATCC 33889 / DSM 1251))).